A 381-amino-acid polypeptide reads, in one-letter code: Methanesulfonate monooxygenase (381 aa).

This sequence belongs to the SsuD family.

It catalyses the reaction an alkanesulfonate + FMNH2 + O2 = an aldehyde + FMN + sulfite + H2O + 2 H(+). Catalyzes the desulfonation of aliphatic sulfonates. Shows highest activity with methanesulfonate. The sequence is that of Methanesulfonate monooxygenase (msuD) from Pseudomonas aeruginosa (strain ATCC 15692 / DSM 22644 / CIP 104116 / JCM 14847 / LMG 12228 / 1C / PRS 101 / PAO1).